A 2763-amino-acid polypeptide reads, in one-letter code: Large tegument protein deneddylase (2763 aa).

Residues 1–247 (MDIIPPIAVT…CDTYFTDEQY (247 aa)) form a deubiquitination activity region. A Peptidase C76 domain is found at 12–237 (AGVGSRNQFD…SSAVTLIYGS (226 aa)). Catalysis depends on residues C32, D168, and H170. Residues 495-523 (LELFINLTILRLTGFVVENGTRTHHGATS) are interaction with inner tegument protein. A disordered region spans residues 2456–2476 (VRPAQPAQPAQPAQPAQTVQP). 5 repeat units span residues 2458-2460 (PAQ), 2461-2463 (PAQ), 2464-2466 (PAQ), 2467-2469 (PAQ), and 2470-2472 (PAQ). The 5 X 3 AA repeats of P-A-Q stretch occupies residues 2458–2472 (PAQPAQPAQPAQPAQ). Positions 2459-2476 (AQPAQPAQPAQPAQTVQP) are enriched in low complexity.

It belongs to the herpesviridae large tegument protein family. In terms of assembly, interacts with host CUL1 and CUL4A; these interactions inhibit the E3 ligase activity of cullins. Interacts with inner tegument protein. Interacts with capsid vertex specific component CVC2. Interacts with the major capsid protein/MCP.

It is found in the virion tegument. The protein resides in the host cytoplasm. The protein localises to the host nucleus. It carries out the reaction Thiol-dependent hydrolysis of ester, thioester, amide, peptide and isopeptide bonds formed by the C-terminal Gly of ubiquitin (a 76-residue protein attached to proteins as an intracellular targeting signal).. Functionally, large tegument protein that plays multiple roles in the viral cycle. During viral entry, remains associated with the capsid while most of the tegument is detached and participates in the capsid transport toward the host nucleus. Plays a role in the routing of the capsid at the nuclear pore complex and subsequent uncoating. Within the host nucleus, acts as a deneddylase and promotes the degradation of nuclear CRLs (cullin-RING ubiquitin ligases) and thereby stabilizes nuclear CRL substrates, while cytoplasmic CRLs remain unaffected. These modifications prevent host cell cycle S-phase progression and create a favorable environment allowing efficient viral genome replication. Participates later in the secondary envelopment of capsids. Indeed, plays a linker role for the association of the outer viral tegument to the capsids together with the inner tegument protein. In Homo sapiens (Human), this protein is Large tegument protein deneddylase.